We begin with the raw amino-acid sequence, 75 residues long: Exodeoxyribonuclease 7 small subunit (75 aa).

It belongs to the XseB family. Heterooligomer composed of large and small subunits.

It is found in the cytoplasm. It catalyses the reaction Exonucleolytic cleavage in either 5'- to 3'- or 3'- to 5'-direction to yield nucleoside 5'-phosphates.. Bidirectionally degrades single-stranded DNA into large acid-insoluble oligonucleotides, which are then degraded further into small acid-soluble oligonucleotides. This Anaplasma phagocytophilum (strain HZ) protein is Exodeoxyribonuclease 7 small subunit.